The following is a 920-amino-acid chain: Dynamin-B (920 aa).

Positions 65 to 84 (NSNNNNNNNNNNKINKNNNN) are disordered. The region spanning 154–448 (EITLPQIIVV…LTKHIRDTFP (295 aa)) is the Dynamin-type G domain. Positions 164–171 (GSQSSGKS) are G1 motif. GTP is bound at residue 164–172 (GSQSSGKSS). The tract at residues 190-192 (VTR) is G2 motif. The tract at residues 204-241 (TTSRNNVNENEDEDEDDNYYDNDNDDNSLEEWGEFGHT) is disordered. Residues 212–236 (ENEDEDEDDNYYDNDNDDNSLEEWG) are compositionally biased toward acidic residues. Positions 290–293 (DLPG) are G3 motif. The G4 motif stretch occupies residues 359–362 (TKLD). GTP is bound by residues 359-365 (TKLDLMD) and 390-393 (NRSQ). The interval 389-392 (VNRS) is G5 motif. The tract at residues 680 to 790 (FQSTSSTSSS…EIQIQQQQQQ (111 aa)) is disordered. Low complexity-rich tracts occupy residues 681–705 (QSTS…NSNP) and 724–751 (QIKQ…QKQQ). Residues 724-751 (QIKQQQQQQQQQQQQSYQQQQQQQQKQQ) are a coiled coil. Pro residues predominate over residues 765 to 774 (PPSPPSPPQP). The segment covering 775–790 (KQQQSHEIQIQQQQQQ) has biased composition (low complexity). In terms of domain architecture, GED spans 825–916 (IYLLRRLLLA…SLSQSENSDL (92 aa)).

Belongs to the TRAFAC class dynamin-like GTPase superfamily. Dynamin/Fzo/YdjA family.

The protein resides in the cytoplasm. Functionally, enzyme hydrolyzing GTP. The chain is Dynamin-B (dymB) from Dictyostelium discoideum (Social amoeba).